A 414-amino-acid chain; its full sequence is Heterogeneous nuclear ribonucleoprotein F (414 aa).

Met1 is subject to N-acetylmethionine. Residue Met2 is modified to N-acetylmethionine; in Heterogeneous nuclear ribonucleoprotein F, N-terminally processed. The RRM 1 domain maps to 11–90; the sequence is FVVKLRGLPW…RYIEVFKSHR (80 aa). Residue Lys72 forms a Glycyl lysine isopeptide (Lys-Gly) (interchain with G-Cter in SUMO) linkage. Positions 81 to 86 are interaction with RNA; it reads RYIEVF. Lys87 participates in a covalent cross-link: Glycyl lysine isopeptide (Lys-Gly) (interchain with G-Cter in SUMO2). Phosphoserine occurs at positions 104 and 161. The RRM 2 domain maps to 111–188; it reads GFVRLRGLPF…RYIEVFKSSQ (78 aa). Lys167 participates in a covalent cross-link: Glycyl lysine isopeptide (Lys-Gly) (interchain with G-Cter in SUMO2). An interaction with RNA region spans residues 179-184; the sequence is RYIEVF. Lys185 participates in a covalent cross-link: Glycyl lysine isopeptide (Lys-Gly) (interchain with G-Cter in SUMO2). Ser187, Ser193, and Ser195 each carry phosphoserine. The residue at position 200 (Lys200) is an N6-acetyllysine; alternate. A Glycyl lysine isopeptide (Lys-Gly) (interchain with G-Cter in SUMO2); alternate cross-link involves residue Lys200. Thr215 is subject to Phosphothreonine. The residue at position 224 (Lys224) is an N6-acetyllysine; alternate. Residue Lys224 forms a Glycyl lysine isopeptide (Lys-Gly) (interchain with G-Cter in SUMO2); alternate linkage. Ser265 carries the post-translational modification Phosphoserine. Residues 289–366 form the RRM 3 domain; that stretch reads HCVHMRGLPY…IELFLNSTTG (78 aa). The interval 355-360 is interaction with RNA; sequence RYIELF.

Identified in the spliceosome C complex. Interacts with AGO1, AGO2, TBP and TXNL4/DIM1. Post-translationally, sumoylated.

It is found in the nucleus. The protein resides in the nucleoplasm. Component of the heterogeneous nuclear ribonucleoprotein (hnRNP) complexes which provide the substrate for the processing events that pre-mRNAs undergo before becoming functional, translatable mRNAs in the cytoplasm. Plays a role in the regulation of alternative splicing events. Binds G-rich sequences in pre-mRNAs and keeps target RNA in an unfolded state. The sequence is that of Heterogeneous nuclear ribonucleoprotein F (HNRNPF) from Bos taurus (Bovine).